The sequence spans 259 residues: Proteasome subunit beta type-4 (259 aa).

This sequence belongs to the peptidase T1B family. The 26S proteasome consists of a 20S proteasome core and two 19S regulatory subunits. The 20S proteasome core is composed of 28 subunits that are arranged in four stacked rings, resulting in a barrel-shaped structure. The two end rings are each formed by seven alpha subunits, and the two central rings are each formed by seven beta subunits. The catalytic chamber with the active sites is on the inside of the barrel.

Its subcellular location is the cytoplasm. The protein localises to the nucleus. In terms of biological role, non-catalytic component of the proteasome, a multicatalytic proteinase complex which is characterized by its ability to cleave peptides with Arg, Phe, Tyr, Leu, and Glu adjacent to the leaving group at neutral or slightly basic pH. The proteasome has an ATP-dependent proteolytic activity. The polypeptide is Proteasome subunit beta type-4 (psmB4-1) (Dictyostelium discoideum (Social amoeba)).